Reading from the N-terminus, the 293-residue chain is Exosome complex component RRP4 (293 aa).

Residues 1-20 (MALEMRLPKARKPLSESLGR) form a disordered region. In terms of domain architecture, S1 motif spans 79–159 (EVGDIVVGRI…SDGAVSLHTR (81 aa)). Residue S124 is modified to Phosphoserine.

This sequence belongs to the RRP4 family. In terms of assembly, component of the RNA exosome core complex (Exo-9), composed of EXOSC1, EXOSC2, EXOSC3, EXOSC4, EXOSC5, EXOSC6, EXOSC7, EXOSC8 and EXOSC9; within the complex interacts with EXOSC4 and EXOSC7. The catalytically inactive RNA exosome core complex (Exo-9) associates with the catalytic subunit EXOSC10/RRP6. Exo-9 may associate with DIS3 to form the nucleolar exosome complex, or DIS3L to form the cytoplasmic exosome complex. Exo-9 is formed by a hexameric base ring consisting of the heterodimers EXOSC4-EXOSC9, EXOSC5-EXOSC8 and EXOSC6-EXOSC7, and a cap ring consisting of EXOSC1, EXOSC2 and EXOSC3. The RNA exosome complex associates with cofactors C1D/RRP47, MPHOSPH6/MPP6 and MTREX/MTR4. Interacts with GTPBP1. Interacts with ZFP36L1 (via N-terminus).

It is found in the cytoplasm. It localises to the nucleus. The protein resides in the nucleolus. In terms of biological role, non-catalytic component of the RNA exosome complex which has 3'-&gt;5' exoribonuclease activity and participates in a multitude of cellular RNA processing and degradation events. In the nucleus, the RNA exosome complex is involved in proper maturation of stable RNA species such as rRNA, snRNA and snoRNA, in the elimination of RNA processing by-products and non-coding 'pervasive' transcripts, such as antisense RNA species and promoter-upstream transcripts (PROMPTs), and of mRNAs with processing defects, thereby limiting or excluding their export to the cytoplasm. The RNA exosome may be involved in Ig class switch recombination (CSR) and/or Ig variable region somatic hypermutation (SHM) by targeting AICDA deamination activity to transcribed dsDNA substrates. In the cytoplasm, the RNA exosome complex is involved in general mRNA turnover and specifically degrades inherently unstable mRNAs containing AU-rich elements (AREs) within their 3' untranslated regions, and in RNA surveillance pathways, preventing translation of aberrant mRNAs. It seems to be involved in degradation of histone mRNA. The catalytic inactive RNA exosome core complex of 9 subunits (Exo-9) is proposed to play a pivotal role in the binding and presentation of RNA for ribonucleolysis, and to serve as a scaffold for the association with catalytic subunits and accessory proteins or complexes. EXOSC2 as peripheral part of the Exo-9 complex stabilizes the hexameric ring of RNase PH-domain subunits through contacts with EXOSC4 and EXOSC7. The protein is Exosome complex component RRP4 (Exosc2) of Mus musculus (Mouse).